The following is a 176-amino-acid chain: Calponin-1 (176 aa).

The Calponin-homology (CH) domain maps to 22–125 (PQTERQLRVW…STLIALASQA (104 aa)). The Calponin-like repeat unit spans residues 158–176 (IGLQMGTNKFASQQGMTAY). A Phosphothreonine; by ROCK2 modification is found at threonine 164. Serine 169 bears the Phosphoserine; by ROCK2 mark. Threonine 174 is modified (phosphothreonine; by ROCK2).

Belongs to the calponin family. Smooth muscle, and tissues containing significant amounts of smooth muscle.

Functionally, thin filament-associated protein that is implicated in the regulation and modulation of smooth muscle contraction. It is capable of binding to actin, calmodulin and tropomyosin. The interaction of calponin with actin inhibits the actomyosin Mg-ATPase activity. This Meleagris gallopavo (Wild turkey) protein is Calponin-1 (CNN1).